The primary structure comprises 256 residues: Hemin import ATP-binding protein HmuV (256 aa).

Residues 2 to 238 enclose the ABC transporter domain; sequence ISAQNLVYSL…QALTMLYGAD (237 aa). Residue 34–41 coordinates ATP; sequence GPNGAGKS.

Belongs to the ABC transporter superfamily. Heme (hemin) importer (TC 3.A.1.14.5) family. As to quaternary structure, the complex is composed of two ATP-binding proteins (HmuV), two transmembrane proteins (HmuU) and a solute-binding protein (HmuT).

Its subcellular location is the cell inner membrane. Its function is as follows. Part of the ABC transporter complex HmuTUV involved in hemin import. Responsible for energy coupling to the transport system. The sequence is that of Hemin import ATP-binding protein HmuV from Escherichia coli O6:K15:H31 (strain 536 / UPEC).